A 191-amino-acid chain; its full sequence is 3-isopropylmalate dehydratase small subunit (191 aa).

It belongs to the LeuD family. LeuD type 1 subfamily. As to quaternary structure, heterodimer of LeuC and LeuD.

The catalysed reaction is (2R,3S)-3-isopropylmalate = (2S)-2-isopropylmalate. It participates in amino-acid biosynthesis; L-leucine biosynthesis; L-leucine from 3-methyl-2-oxobutanoate: step 2/4. Functionally, catalyzes the isomerization between 2-isopropylmalate and 3-isopropylmalate, via the formation of 2-isopropylmaleate. In Lactococcus lactis subsp. cremoris (strain MG1363), this protein is 3-isopropylmalate dehydratase small subunit.